Here is a 675-residue protein sequence, read N- to C-terminus: Collagen alpha-3(IX) chain (675 aa).

Positions 1–21 (MTVFPTLGLLFLCQLLATTSA) are cleaved as a signal peptide. Disordered regions lie at residues 22 to 517 (QRVG…KEAS) and 542 to 660 (KPLS…ICDT). Positions 25 to 515 (GPQGPPGPRG…TGKPGPPGKE (491 aa)) are triple-helical region 3 (COL3). Pro residues-rich tracts occupy residues 27–38 (QGPPGPRGPPGP) and 51–60 (SGLPGPPGPK). Residues 62 to 87 (APGKPGAAGEAGLPGLPGVDGLTGTD) show a composition bias toward low complexity. Over residues 105-125 (AGPPGPAGKGLPGPPGPPGPS) the composition is skewed to pro residues. The segment covering 126–135 (GLPGGNGFRG) has biased composition (gly residues). 2 stretches are compositionally biased toward pro residues: residues 136-155 (PPGPSGLPGFPGPPGPPGPP) and 173-184 (LCPPGPPGPPGM). Residues 218 to 233 (PGSVGLQGPRGLRGLP) are compositionally biased toward low complexity. A Cell attachment site motif is present at residues 242–244 (RGD). Basic and acidic residues predominate over residues 301–317 (KDGRDGAPGLDGEKGDA). Low complexity predominate over residues 361–374 (EPGIPGDVGIPGDR). Residue N479 is glycosylated (N-linked (GlcNAc...) asparagine). Over residues 481–508 (TAGAPGIPGHPGPMGHQGEQGVPGITGK) the composition is skewed to low complexity. The segment at 516-546 (ASEQHIRELCGEMINDQIAQLAANLRKPLSP) is nonhelical region 3 (NC3). The tract at residues 547–626 (GMTGRPGPAG…QGLPGVPGIS (80 aa)) is triple-helical region 2 (COL2). Residues 569–582 (HPGARGPPGYRGPT) show a composition bias toward low complexity. The Cell attachment site signature appears at 591–593 (RGD). The segment covering 613–624 (DQGPQGLPGVPG) has biased composition (low complexity). Residues 627–631 (KNGRD) are nonhelical region 2 (NC2). The segment at 632–658 (GAQGEPGLPGDPGTPGAVGAQGTPGIC) is triple-helical region 1 (COL1). Positions 659–675 (DTSACMGAVGASTSKKS) are nonhelical region 1 (NC1).

Belongs to the fibril-associated collagens with interrupted helices (FACIT) family. In terms of assembly, trimers composed of three different chains: alpha 1(IX), alpha 2(IX), and alpha 3(IX). In terms of processing, prolines at the third position of the tripeptide repeating unit (G-X-Y) are hydroxylated in some or all of the chains.

The protein resides in the secreted. It is found in the extracellular space. The protein localises to the extracellular matrix. Its function is as follows. Collagen type IX is a minor cartilage non-fibrillar collagen. It is associated with type II collagen fibrils. This Gallus gallus (Chicken) protein is Collagen alpha-3(IX) chain (COL9A3).